Consider the following 880-residue polypeptide: DNA mismatch repair protein MutS (880 aa).

Gly-631–Ser-638 contacts ATP. The tract at residues Arg-835–Pro-860 is disordered. Residues Pro-850–Pro-860 are compositionally biased toward basic and acidic residues.

Belongs to the DNA mismatch repair MutS family.

In terms of biological role, this protein is involved in the repair of mismatches in DNA. It is possible that it carries out the mismatch recognition step. This protein has a weak ATPase activity. The chain is DNA mismatch repair protein MutS from Cereibacter sphaeroides (strain ATCC 17029 / ATH 2.4.9) (Rhodobacter sphaeroides).